A 101-amino-acid chain; its full sequence is Urease subunit beta (101 aa).

The protein belongs to the urease beta subunit family. Heterotrimer of UreA (gamma), UreB (beta) and UreC (alpha) subunits. Three heterotrimers associate to form the active enzyme.

The protein localises to the cytoplasm. It catalyses the reaction urea + 2 H2O + H(+) = hydrogencarbonate + 2 NH4(+). It functions in the pathway nitrogen metabolism; urea degradation; CO(2) and NH(3) from urea (urease route): step 1/1. This is Urease subunit beta from Burkholderia thailandensis (strain ATCC 700388 / DSM 13276 / CCUG 48851 / CIP 106301 / E264).